We begin with the raw amino-acid sequence, 136 residues long: Large ribosomal subunit protein uL16 (136 aa).

This sequence belongs to the universal ribosomal protein uL16 family. In terms of assembly, part of the 50S ribosomal subunit.

Binds 23S rRNA and is also seen to make contacts with the A and possibly P site tRNAs. The polypeptide is Large ribosomal subunit protein uL16 (Ehrlichia chaffeensis (strain ATCC CRL-10679 / Arkansas)).